The chain runs to 101 residues: NAD(P)H-quinone oxidoreductase subunit 4L, chloroplastic (101 aa).

2 helical membrane passes run 2 to 22 (MFEH…YGLI) and 61 to 81 (IFSI…LAIV).

Belongs to the complex I subunit 4L family. NDH is composed of at least 16 different subunits, 5 of which are encoded in the nucleus.

The protein resides in the plastid. It is found in the chloroplast thylakoid membrane. It carries out the reaction a plastoquinone + NADH + (n+1) H(+)(in) = a plastoquinol + NAD(+) + n H(+)(out). The catalysed reaction is a plastoquinone + NADPH + (n+1) H(+)(in) = a plastoquinol + NADP(+) + n H(+)(out). In terms of biological role, NDH shuttles electrons from NAD(P)H:plastoquinone, via FMN and iron-sulfur (Fe-S) centers, to quinones in the photosynthetic chain and possibly in a chloroplast respiratory chain. The immediate electron acceptor for the enzyme in this species is believed to be plastoquinone. Couples the redox reaction to proton translocation, and thus conserves the redox energy in a proton gradient. The polypeptide is NAD(P)H-quinone oxidoreductase subunit 4L, chloroplastic (Dioscorea elephantipes (Elephant's foot yam)).